The following is a 102-amino-acid chain: Co-chaperonin GroES (102 aa).

Belongs to the GroES chaperonin family. Heptamer of 7 subunits arranged in a ring. Interacts with the chaperonin GroEL.

The protein localises to the cytoplasm. Functionally, together with the chaperonin GroEL, plays an essential role in assisting protein folding. The GroEL-GroES system forms a nano-cage that allows encapsulation of the non-native substrate proteins and provides a physical environment optimized to promote and accelerate protein folding. GroES binds to the apical surface of the GroEL ring, thereby capping the opening of the GroEL channel. This is Co-chaperonin GroES from Chlamydia pneumoniae (Chlamydophila pneumoniae).